The sequence spans 97 residues: DNA replication protein 1 (97 aa).

The stretch at 49-78 (IELEKKMTKLEHENKLMKNALYELSRMENN) forms a coiled coil.

Belongs to the phi29likevirus DNA replication protein 1 family. As to quaternary structure, homomultimer. Self-associates into large complexes forming long filamentous structures. Interacts (via N-terminus) with the primer terminal protein.

The protein resides in the host membrane. Its function is as follows. Protein that assembles into highly ordered structures and provides a specific site for viral DNA replication. Probably anchors the viral DNA replisome to the host membrane. The chain is DNA replication protein 1 (1C) from Bacillus subtilis (Bacteriophage PZA).